We begin with the raw amino-acid sequence, 433 residues long: Dihydroorotase (433 aa).

Residues H63 and H65 each contribute to the Zn(2+) site. Substrate is bound by residues 65–67 and N97; that span reads HLR. Zn(2+) is bound by residues D155, H182, and H235. N283 is a binding site for substrate. D310 contacts Zn(2+). The active site involves D310. H314 contributes to the substrate binding site.

It belongs to the metallo-dependent hydrolases superfamily. DHOase family. Class I DHOase subfamily. Zn(2+) is required as a cofactor.

The enzyme catalyses (S)-dihydroorotate + H2O = N-carbamoyl-L-aspartate + H(+). The protein operates within pyrimidine metabolism; UMP biosynthesis via de novo pathway; (S)-dihydroorotate from bicarbonate: step 3/3. Functionally, catalyzes the reversible cyclization of carbamoyl aspartate to dihydroorotate. The protein is Dihydroorotase of Anaeromyxobacter sp. (strain K).